Here is a 167-residue protein sequence, read N- to C-terminus: MIIFKDVISNDEMCSDAFEPKVVDNVVYEVDCTMIQVAEGDVDIGANPSAEDAEEGVDSDVQTVNNVVHSFRLQSTGFDKKSYLTYLKGYMKSIKNYLAENKPEEVENFEKGAQAYAKKIVANFKDFDFYTGESMDPDGMVALLNYREDGTTPYLIFWKHGIKEEKI.

The TCTP domain maps to 1-167; the sequence is MIIFKDVISN…WKHGIKEEKI (167 aa).

Belongs to the TCTP family.

The protein localises to the cytoplasm. It is found in the cytoskeleton. Its function is as follows. Involved in protein synthesis. Involved in microtubule stabilization. The chain is Translationally-controlled tumor protein homolog from Yarrowia lipolytica (strain CLIB 122 / E 150) (Yeast).